We begin with the raw amino-acid sequence, 97 residues long: DNA-directed RNA polymerase subunit omega (97 aa).

Belongs to the RNA polymerase subunit omega family. As to quaternary structure, the RNAP catalytic core consists of 2 alpha, 1 beta, 1 beta' and 1 omega subunit. When a sigma factor is associated with the core the holoenzyme is formed, which can initiate transcription.

It carries out the reaction RNA(n) + a ribonucleoside 5'-triphosphate = RNA(n+1) + diphosphate. Promotes RNA polymerase assembly. Latches the N- and C-terminal regions of the beta' subunit thereby facilitating its interaction with the beta and alpha subunits. The protein is DNA-directed RNA polymerase subunit omega of Coxiella burnetii (strain CbuK_Q154) (Coxiella burnetii (strain Q154)).